Consider the following 553-residue polypeptide: Glucose-6-phosphate isomerase (553 aa).

The active-site Proton donor is glutamate 355. Catalysis depends on residues histidine 386 and lysine 513.

It belongs to the GPI family.

Its subcellular location is the cytoplasm. The catalysed reaction is alpha-D-glucose 6-phosphate = beta-D-fructose 6-phosphate. The protein operates within carbohydrate biosynthesis; gluconeogenesis. It participates in carbohydrate degradation; glycolysis; D-glyceraldehyde 3-phosphate and glycerone phosphate from D-glucose: step 2/4. Its function is as follows. Catalyzes the reversible isomerization of glucose-6-phosphate to fructose-6-phosphate. The protein is Glucose-6-phosphate isomerase of Baumannia cicadellinicola subsp. Homalodisca coagulata.